Here is a 668-residue protein sequence, read N- to C-terminus: tRNA 5-methylaminomethyl-2-thiouridine biosynthesis bifunctional protein MnmC (668 aa).

Residues 1–245 form a tRNA (mnm(5)s(2)U34)-methyltransferase region; the sequence is MKHYSIQPAN…KREMLCGVME (245 aa). An FAD-dependent cmnm(5)s(2)U34 oxidoreductase region spans residues 270–668; the sequence is IGGGIASALL…LLKGKAVKAG (399 aa).

The protein in the N-terminal section; belongs to the methyltransferase superfamily. tRNA (mnm(5)s(2)U34)-methyltransferase family. In the C-terminal section; belongs to the DAO family. Requires FAD as cofactor.

Its subcellular location is the cytoplasm. The catalysed reaction is 5-aminomethyl-2-thiouridine(34) in tRNA + S-adenosyl-L-methionine = 5-methylaminomethyl-2-thiouridine(34) in tRNA + S-adenosyl-L-homocysteine + H(+). In terms of biological role, catalyzes the last two steps in the biosynthesis of 5-methylaminomethyl-2-thiouridine (mnm(5)s(2)U) at the wobble position (U34) in tRNA. Catalyzes the FAD-dependent demodification of cmnm(5)s(2)U34 to nm(5)s(2)U34, followed by the transfer of a methyl group from S-adenosyl-L-methionine to nm(5)s(2)U34, to form mnm(5)s(2)U34. The chain is tRNA 5-methylaminomethyl-2-thiouridine biosynthesis bifunctional protein MnmC from Escherichia coli (strain UTI89 / UPEC).